The primary structure comprises 388 residues: Adenosine deaminase-like protein (388 aa).

Over residues 1–13 (MPNNSKHKKKQQR) the composition is skewed to basic residues. The interval 1–34 (MPNNSKHKKKQQRRQQEAQKKSRAKQIETDKKND) is disordered. Residues 14 to 34 (RQQEAQKKSRAKQIETDKKND) show a composition bias toward basic and acidic residues. Histidine 65 and histidine 67 together coordinate Zn(2+). N(6)-methyl-AMP is bound by residues histidine 67, histidine 114, 146–149 (TSPK), aspartate 186, and glycine 218. Histidine 245 serves as a coordination point for Zn(2+). The N(6)-methyl-AMP site is built by glutamate 248, aspartate 326, and aspartate 327. The Proton donor role is filled by glutamate 248. Residue aspartate 326 coordinates Zn(2+).

Belongs to the metallo-dependent hydrolases superfamily. Adenosine and AMP deaminases family. As to quaternary structure, monomer. Requires Zn(2+) as cofactor.

It carries out the reaction N(6)-methyl-AMP + H2O + H(+) = IMP + methylamine. In terms of biological role, catalyzes the hydrolysis of the free cytosolic methylated adenosine nucleotide N(6)-methyl-AMP (N6-mAMP) to produce inositol monophosphate (IMP) and methylamine. Is required for the catabolism of cytosolic N6-mAMP, which is derived from the degradation of mRNA containing N6-methylated adenine (m6A). This chain is Adenosine deaminase-like protein, found in Caenorhabditis elegans.